Consider the following 495-residue polypeptide: Probable cytosol aminopeptidase (495 aa).

Mn(2+) is bound by residues Lys-258 and Asp-263. Lys-270 is an active-site residue. The Mn(2+) site is built by Asp-281, Asp-340, and Glu-342. Residue Arg-344 is part of the active site.

The protein belongs to the peptidase M17 family. Mn(2+) is required as a cofactor.

It localises to the cytoplasm. The catalysed reaction is Release of an N-terminal amino acid, Xaa-|-Yaa-, in which Xaa is preferably Leu, but may be other amino acids including Pro although not Arg or Lys, and Yaa may be Pro. Amino acid amides and methyl esters are also readily hydrolyzed, but rates on arylamides are exceedingly low.. The enzyme catalyses Release of an N-terminal amino acid, preferentially leucine, but not glutamic or aspartic acids.. In terms of biological role, presumably involved in the processing and regular turnover of intracellular proteins. Catalyzes the removal of unsubstituted N-terminal amino acids from various peptides. The polypeptide is Probable cytosol aminopeptidase (Leptospira interrogans serogroup Icterohaemorrhagiae serovar Lai (strain 56601)).